Consider the following 880-residue polypeptide: 3-isopropylmalate dehydratase large subunit gloJ (880 aa).

Residues Cys457, Cys520, and Cys523 each contribute to the [4Fe-4S] cluster site.

This sequence belongs to the aconitase/IPM isomerase family. LeuC type 2 subfamily. [4Fe-4S] cluster serves as cofactor.

The catalysed reaction is (2R,3S)-3-isopropylmalate = (2S)-2-isopropylmalate. The protein operates within mycotoxin biosynthesis. 3-isopropylmalate dehydratase large subunit; part of the gene cluster that mediates the biosynthesis of pneumocandins, lipohexapeptides of the echinocandin family that prevent fungal cell wall formation by non-competitive inhibition of beta-1,3-glucan synthase. The 10,12-dimethylmyristoyl side chain is synthesized by the reducing polyketide synthase gloL/GLPKS4. The thioesterase gloN/GLHYD exclusively interacts with gloL/GLPKS4 to maintain turnover of the polyketide side chain. The 10R,12S-dimethylmyristic acid is then transferred to the first thiolation domain of the nonribosomal peptide synthetase gloA/GLNRPS4 by the acyl-AMP ligase gloD/GLligase, followed by its acylation to L-ornithine to trigger elongation of the cyclic hexapeptide. L-ornithine, 4R-hydroxyl-L-proline (generated from L-proline by the dioxygenase gloF/GLOXY2), 3S-hydroxyl-L-homotyrosine (generated by gloG/GLHtyB, gloH/GLHtyA, gloI/GLHtyC, gloJ/GLHtyD and hydroxylated at C-3 by the dioxygenase gloM/GLOXY1), 3R-hydroxyl-L-glutamine (generated from L-glutamine probably by the dioxygenase gloE/GLOXY3) and 3S-hydroxyl-L-proline (generated from L-proline by the dioxygenase gloF/GLOXY2 to yield pneumocandin B0), or 3S-hydroxyl-4S-methyl-L-proline (generated from L-leucine by the dioxygenase gloC/GLOXY4 to yield pneumocandin A0) are sequentially added to the growing chain. The last C domain of gloA/GLNRPS4 is proposed to be responsible for cyclization by condensation to form the peptide bond between L-ornithine and 3S-hydroxyl-4S-methyl-L-proline (for pneumocandin A0) or 3S-hydroxyl-L-proline (for pneumocandin B0). Finally, the subsequent C-4 hydroxylation of 3S-hydroxyl-L-homotyrosine and L-ornithine dihydroxylation at C-4 and C-5 are performed by the cytochrome P450 monooxygenases gloP/GLP450-1 and gloO/GLP450-2, respectively. This chain is 3-isopropylmalate dehydratase large subunit gloJ, found in Glarea lozoyensis (strain ATCC 20868 / MF5171).